The chain runs to 184 residues: ADP-ribosylation factor-like protein 2 (184 aa).

Gly-2 is lipidated: N-myristoyl glycine. 23 to 30 (GLDNAGKT) lines the GTP pocket. The residue at position 45 (Ser-45) is a Phosphoserine. GTP-binding positions include 66-70 (DVGGQ) and Gly-68. Lys-71 participates in a covalent cross-link: Glycyl lysine isopeptide (Lys-Gly) (interchain with G-Cter in ubiquitin). 125-128 (NKQD) lines the GTP pocket.

Belongs to the small GTPase superfamily. Arf family. Interacts with ELMOD2. Interacts with ARL2BP; the GTP-bound form interacts with ARL2BP. The GDP-bound form interacts preferentially with TBCD. Interacts with UNC119. Found in a complex with ARL2, ARL2BP and SLC25A4. The GTP-bound form interacts with PDE6D. Found in a complex with ARL2, ARL2BP and SLC25A6. Found in a complex with at least ARL2, PPP2CB, PPP2R1A, PPP2R2A, PPP2R5E and TBCD. Post-translationally, not N-myristoylated. Expressed in liver and retina (at protein level).

It is found in the nucleus. The protein resides in the mitochondrion intermembrane space. Its subcellular location is the cytoplasm. The protein localises to the cytoskeleton. It localises to the microtubule organizing center. It is found in the centrosome. The protein resides in the mitochondrion. Its function is as follows. Small GTP-binding protein which cycles between an inactive GDP-bound and an active GTP-bound form, and the rate of cycling is regulated by guanine nucleotide exchange factors (GEF) and GTPase-activating proteins (GAP). GTP-binding protein that does not act as an allosteric activator of the cholera toxin catalytic subunit. Regulates formation of new microtubules and centrosome integrity. Prevents the TBCD-induced microtubule destruction. Participates in association with TBCD, in the disassembly of the apical junction complexes. Antagonizes the effect of TBCD on epithelial cell detachment and tight and adherens junctions disassembly. Together with ARL2, plays a role in the nuclear translocation, retention and transcriptional activity of STAT3. Component of a regulated secretory pathway involved in Ca(2+)-dependent release of acetylcholine. Required for normal progress through the cell cycle. The chain is ADP-ribosylation factor-like protein 2 (ARL2) from Bos taurus (Bovine).